Consider the following 72-residue polypeptide: Mitochondrial import protein 2 (72 aa).

The segment at 1–22 is disordered; sequence MAEVLDLEIDPISDGEDDTYSS. At 1–34 the chain is on the cytoplasmic side; it reads MAEVLDLEIDPISDGEDDTYSSELDDDLKDSIEQ. A helical membrane pass occupies residues 35-52; that stretch reads LERVLCLVVFPLLGKFLG. At 53-72 the chain is on the mitochondrial intermembrane side; sequence RKFAFHAWARWLERRRLVSN.

The protein belongs to the MIM2 family. In terms of assembly, component of the mitochondrial outer import machinery (MIM) complex containing at least mim1 and mim2. Interacts with mim1. Interacts with mitophagy receptor atg43.

It is found in the mitochondrion outer membrane. Functionally, component of the mitochondrial outer import machinery (MIM) complex that mediates transport of proteins into mitochondrial compartments. Promotes the insertion of tom70 into the outer mitochondrial membrane. Promotes the insertion of atg43 into the outer mitochondrial membrane. Involved in import of the subset of proteins with multiple alpha-helical transmembrane segments. This chain is Mitochondrial import protein 2, found in Schizosaccharomyces pombe (strain 972 / ATCC 24843) (Fission yeast).